The chain runs to 182 residues: Probable tyrosine phosphatase protein H4 (182 aa).

A Tyrosine-protein phosphatase domain is found at 1–182 (MEINKFICSQ…TVLKIQKSKI (182 aa)). The Phosphocysteine intermediate role is filled by cysteine 142.

It belongs to the protein-tyrosine phosphatase family.

The enzyme catalyses O-phospho-L-tyrosyl-[protein] + H2O = L-tyrosyl-[protein] + phosphate. In Microplitis demolitor (Parasitoid wasp), this protein is Probable tyrosine phosphatase protein H4 (H5).